Here is a 57-residue protein sequence, read N- to C-terminus: Plasma membrane proteolipid 3 (57 aa).

Residues 34–54 traverse the membrane as a helical segment; it reads INILLTILGYLPGIVHALYII.

The protein belongs to the UPF0057 (PMP3) family.

The protein resides in the cell membrane. In terms of biological role, plays a role in the regulation of membrane potential. Could mediate a proton leak. The chain is Plasma membrane proteolipid 3 (pmp-1) from Neurospora crassa (strain ATCC 24698 / 74-OR23-1A / CBS 708.71 / DSM 1257 / FGSC 987).